The primary structure comprises 210 residues: Somatotropin-2 (210 aa).

The first 22 residues, 1–22 (MARALVLLSVVLVSLLVNQGRA), serve as a signal peptide directing secretion. Zn(2+) is bound at residue histidine 38. An intrachain disulfide couples cysteine 71 to cysteine 183. Glutamate 192 is a binding site for Zn(2+). A disulfide bridge links cysteine 200 with cysteine 208.

It belongs to the somatotropin/prolactin family.

Its subcellular location is the secreted. Its function is as follows. Growth hormone plays an important role in growth control and is involved in the regulation of several anabolic processes. Implicated as an osmoregulatory substance important for seawater adaptation. The protein is Somatotropin-2 (gh2) of Carassius auratus (Goldfish).